Here is a 379-residue protein sequence, read N- to C-terminus: Queuine tRNA-ribosyltransferase (379 aa).

Asp-94 functions as the Proton acceptor in the catalytic mechanism. Substrate-binding positions include 94–98, Asp-148, Gln-191, and Gly-218; that span reads DSGGF. An RNA binding region spans residues 249 to 255; it reads GVGSPDS. Asp-268 serves as the catalytic Nucleophile. Residues 273 to 277 are RNA binding; important for wobble base 34 recognition; the sequence is TRIAR. Zn(2+) contacts are provided by Cys-306, Cys-308, Cys-311, and His-337.

This sequence belongs to the queuine tRNA-ribosyltransferase family. Homodimer. Within each dimer, one monomer is responsible for RNA recognition and catalysis, while the other monomer binds to the replacement base PreQ1. It depends on Zn(2+) as a cofactor.

The catalysed reaction is 7-aminomethyl-7-carbaguanine + guanosine(34) in tRNA = 7-aminomethyl-7-carbaguanosine(34) in tRNA + guanine. Its pathway is tRNA modification; tRNA-queuosine biosynthesis. Its function is as follows. Catalyzes the base-exchange of a guanine (G) residue with the queuine precursor 7-aminomethyl-7-deazaguanine (PreQ1) at position 34 (anticodon wobble position) in tRNAs with GU(N) anticodons (tRNA-Asp, -Asn, -His and -Tyr). Catalysis occurs through a double-displacement mechanism. The nucleophile active site attacks the C1' of nucleotide 34 to detach the guanine base from the RNA, forming a covalent enzyme-RNA intermediate. The proton acceptor active site deprotonates the incoming PreQ1, allowing a nucleophilic attack on the C1' of the ribose to form the product. After dissociation, two additional enzymatic reactions on the tRNA convert PreQ1 to queuine (Q), resulting in the hypermodified nucleoside queuosine (7-(((4,5-cis-dihydroxy-2-cyclopenten-1-yl)amino)methyl)-7-deazaguanosine). In Listeria monocytogenes serovar 1/2a (strain ATCC BAA-679 / EGD-e), this protein is Queuine tRNA-ribosyltransferase.